We begin with the raw amino-acid sequence, 308 residues long: ATP synthase gamma chain (308 aa).

This sequence belongs to the ATPase gamma chain family. As to quaternary structure, F-type ATPases have 2 components, CF(1) - the catalytic core - and CF(0) - the membrane proton channel. CF(1) has five subunits: alpha(3), beta(3), gamma(1), delta(1), epsilon(1). CF(0) has three main subunits: a, b and c.

Its subcellular location is the cell membrane. In terms of biological role, produces ATP from ADP in the presence of a proton gradient across the membrane. The gamma chain is believed to be important in regulating ATPase activity and the flow of protons through the CF(0) complex. This chain is ATP synthase gamma chain, found in Mycobacteroides abscessus (strain ATCC 19977 / DSM 44196 / CCUG 20993 / CIP 104536 / JCM 13569 / NCTC 13031 / TMC 1543 / L948) (Mycobacterium abscessus).